The following is a 453-amino-acid chain: 3-phosphoshikimate 1-carboxyvinyltransferase (453 aa).

Positions 1 to 12 are enriched in polar residues; the sequence is MDVNVTSSTVRG. Positions 1–21 are disordered; the sequence is MDVNVTSSTVRGTTRAPPSKS. Residues Lys20, Ser21, and Arg25 each contribute to the 3-phosphoshikimate site. Lys20 contributes to the phosphoenolpyruvate binding site. Phosphoenolpyruvate is bound by residues Gly97 and Arg125. 3-phosphoshikimate is bound by residues Ser170, Ser171, Gln172, Ser198, Asp330, and Lys357. Gln172 contacts phosphoenolpyruvate. The active-site Proton acceptor is the Asp330. Phosphoenolpyruvate is bound by residues Arg361 and Arg404.

Belongs to the EPSP synthase family. Monomer.

The protein resides in the cytoplasm. It catalyses the reaction 3-phosphoshikimate + phosphoenolpyruvate = 5-O-(1-carboxyvinyl)-3-phosphoshikimate + phosphate. The protein operates within metabolic intermediate biosynthesis; chorismate biosynthesis. Catalyzes the transfer of the enolpyruvyl moiety of phosphoenolpyruvate (PEP) to the 5-hydroxyl of shikimate-3-phosphate (S3P) to produce enolpyruvyl shikimate-3-phosphate and inorganic phosphate. In Halorubrum lacusprofundi (strain ATCC 49239 / DSM 5036 / JCM 8891 / ACAM 34), this protein is 3-phosphoshikimate 1-carboxyvinyltransferase.